A 279-amino-acid polypeptide reads, in one-letter code: Zinc finger AN1 and C2H2 domain-containing stress-associated protein 11 (279 aa).

AN1-type zinc fingers lie at residues 7–55 (PDLG…REDV) and 95–145 (ATKK…KLPF). Zn(2+)-binding residues include Cys13, Cys18, Cys28, Cys31, Cys36, His39, His45, Cys47, Cys101, Cys106, Cys118, Cys121, Cys126, His129, His135, and Cys137. The disordered stretch occupies residues 152 to 178 (STTRKEAKTTRPNKAHPSTSSSSSSSR). Over residues 169–178 (STSSSSSSSR) the composition is skewed to low complexity. 2 C2H2-type zinc fingers span residues 213–236 (EVCPQCGAKFSSVTSLVEHVEKTH) and 250–273 (DVCPRCSRGFRDPVDLVNHIERDH).

May be involved in environmental stress response. The polypeptide is Zinc finger AN1 and C2H2 domain-containing stress-associated protein 11 (SAP11) (Arabidopsis thaliana (Mouse-ear cress)).